The chain runs to 825 residues: Thioredoxin domain-containing protein 16 (825 aa).

The first 27 residues, 1–27 (MFSGFNVFRVGISFVIMCIFYMPTVNS), serve as a signal peptide directing secretion. A Thioredoxin domain is found at 392 to 495 (LTVELTEETF…EDLLKFIQLN (104 aa)). Residues Cys449 and Cys456 are joined by a disulfide bond. Residue Asn460 is glycosylated (N-linked (GlcNAc...) asparagine). A disordered region spans residues 762–787 (RKVPKCMKETDVQENDKEQHEDKSAV). Positions 767-787 (CMKETDVQENDKEQHEDKSAV) are enriched in basic and acidic residues. The short motif at 816–819 (DKEL) is the Mediates endoplasmic reticulum retention element.

In terms of assembly, interacts with FOXRED2. In terms of processing, glycosylated.

The protein localises to the secreted. It is found in the endoplasmic reticulum lumen. In Homo sapiens (Human), this protein is Thioredoxin domain-containing protein 16.